Consider the following 514-residue polypeptide: DNA damage-binding protein CMR1 (514 aa).

Positions 26–116 (NLDSLSQSIK…VKQEEKEELS (91 aa)) are disordered. The span at 34-44 (IKRELPRASET) shows a compositional bias: basic and acidic residues. Residues 45–55 (KKRKTTPRTKA) are compositionally biased toward basic residues. Basic and acidic residues-rich tracts occupy residues 56–65 (VKKEDVEPSR) and 92–116 (KFED…EELS). WD repeat units follow at residues 180 to 221 (ISHT…DDSE), 229 to 269 (PHGK…STEV), 280 to 320 (DYAL…KPLK), 327 to 367 (LHDK…KANA), 385 to 423 (SSRL…LIPD), 438 to 481 (GRWV…IAHL), and 483 to 514 (DSVG…YLFE).

Belongs to the WD repeat DDB2/WDR76 family.

Functionally, DNA-binding protein that binds to both single- and double-stranded DNA. Binds preferentially to UV-damaged DNA. May be involved in DNA-metabolic processes. The sequence is that of DNA damage-binding protein CMR1 (PRW1) from Scheffersomyces stipitis (strain ATCC 58785 / CBS 6054 / NBRC 10063 / NRRL Y-11545) (Yeast).